A 600-amino-acid chain; its full sequence is Proline--tRNA ligase (600 aa).

It belongs to the class-II aminoacyl-tRNA synthetase family. ProS type 1 subfamily. In terms of assembly, homodimer.

It localises to the cytoplasm. The enzyme catalyses tRNA(Pro) + L-proline + ATP = L-prolyl-tRNA(Pro) + AMP + diphosphate. In terms of biological role, catalyzes the attachment of proline to tRNA(Pro) in a two-step reaction: proline is first activated by ATP to form Pro-AMP and then transferred to the acceptor end of tRNA(Pro). As ProRS can inadvertently accommodate and process non-cognate amino acids such as alanine and cysteine, to avoid such errors it has two additional distinct editing activities against alanine. One activity is designated as 'pretransfer' editing and involves the tRNA(Pro)-independent hydrolysis of activated Ala-AMP. The other activity is designated 'posttransfer' editing and involves deacylation of mischarged Ala-tRNA(Pro). The misacylated Cys-tRNA(Pro) is not edited by ProRS. The polypeptide is Proline--tRNA ligase (Prochlorococcus marinus (strain MIT 9215)).